Reading from the N-terminus, the 543-residue chain is Neurofilament light polypeptide (543 aa).

Serine 2 is modified (N-acetylserine). A head region spans residues 2 to 92; that stretch reads SSFSYEPYYS…LKSIRTQEKA (91 aa). Threonine 21 is a glycosylation site (O-linked (GlcNAc) threonine). Arginine 23 carries the post-translational modification Asymmetric dimethylarginine; alternate. Arginine 23 bears the Omega-N-methylarginine; alternate mark. Serine 27 carries an O-linked (GlcNAc) serine glycan. Arginine 30 is modified (omega-N-methylarginine). Tyrosine 43 is modified (phosphotyrosine). Serine 56, serine 67, and serine 103 each carry phosphoserine. The 311-residue stretch at 90–400 folds into the IF rod domain; it reads EKAQLQDLND…KLLEGEETRL (311 aa). Residues 93-124 form a coil 1A region; it reads QLQDLNDRFASFIERVHELEQQNKVLEAELLV. The tract at residues 125 to 137 is linker 1; that stretch reads LRQKHSEPSRFRA. The tract at residues 138-234 is coil 1B; it reads LYEQEIRDLR…KVHEEEIAEL (97 aa). A linker 12 region spans residues 235–252; it reads QAQIQYAQISVEMDVTKP. The tract at residues 253–271 is coil 2A; sequence DLSAALKDIRAQYEKLAAK. The tract at residues 272–280 is linker 2; sequence NMQNAEEWF. The coil 2B stretch occupies residues 281–396; sequence KSRFTVLTES…AAYRKLLEGE (116 aa). An epitope; recognized by IF-specific monoclonal antibody region spans residues 381-391; the sequence is ALDIEIAAYRK. Positions 397–443 are tail, subdomain A; sequence ETRLSFTSVGSITSGYSQSSQVFGRSAYGGLQTSSYLMSTRSFPSYY. The interval 397–543 is tail; the sequence is ETRLSFTSVG…GEEQAAKKKD (147 aa). Residues 444–543 form a tail, subdomain B (acidic) region; it reads TSHVQEEQIE…GEEQAAKKKD (100 aa). The disordered stretch occupies residues 462–543; the sequence is KAEEAKDEPP…GEEQAAKKKD (82 aa). Residues 471 to 525 are compositionally biased toward acidic residues; that stretch reads PSEGEAEEEEKDKEEAEEEEAAEEEEAAKEESEEAKEEEEGGEGEEGEETKEAEE. Residues serine 472 and serine 502 each carry the phosphoserine modification. Threonine 520 is subject to Phosphothreonine. The span at 526–543 shows a compositional bias: basic and acidic residues; the sequence is EEKKVEGAGEEQAAKKKD.

It belongs to the intermediate filament family. As to quaternary structure, forms homodimers (in vitro). Forms heterodimers with NEFH or NEFM; which can further hetero-oligomerize (in vitro). Forms heterodimers with INA (in vitro). Interacts with ARHGEF28. Interacts with TRIM2. Post-translationally, O-glycosylated. Phosphorylated in the head and rod regions by the PKC kinase PKN1, leading to the inhibition of polymerization. In terms of processing, ubiquitinated in the presence of TRIM2 and UBE2D1.

It is found in the cell projection. It localises to the axon. The protein localises to the cytoplasm. Its subcellular location is the cytoskeleton. Its function is as follows. Neurofilaments usually contain three intermediate filament proteins: NEFL, NEFM, and NEFH which are involved in the maintenance of neuronal caliber. May additionally cooperate with the neuronal intermediate filament proteins PRPH and INA to form neuronal filamentous networks. This chain is Neurofilament light polypeptide (NEFL), found in Homo sapiens (Human).